We begin with the raw amino-acid sequence, 128 residues long: Fluoride-specific ion channel FluC (128 aa).

A run of 4 helical transmembrane segments spans residues 1 to 21 (MPER…GATA), 45 to 65 (LAGC…SLVS), 70 to 90 (LLLA…MYEI), and 99 to 119 (IFYS…CLYF). Na(+)-binding residues include G78 and T81.

It belongs to the fluoride channel Fluc/FEX (TC 1.A.43) family.

The protein localises to the cell inner membrane. It carries out the reaction fluoride(in) = fluoride(out). Na(+) is not transported, but it plays an essential structural role and its presence is essential for fluoride channel function. In terms of biological role, fluoride-specific ion channel. Important for reducing fluoride concentration in the cell, thus reducing its toxicity. This is Fluoride-specific ion channel FluC from Chlorobium phaeobacteroides (strain BS1).